The following is a 121-amino-acid chain: U15-barytoxin-Tl1a (121 aa).

The first 17 residues, 1 to 17, serve as a signal peptide directing secretion; it reads MKLSVIVLVASFGFAVA. Cystine bridges form between C56/C74, C67/C80, C71/C119, and C73/C90.

It belongs to the neurotoxin 03 (Tx2) family. 03 subfamily. Expressed by the venom gland.

Its subcellular location is the secreted. In terms of biological role, ion channel inhibitor. The polypeptide is U15-barytoxin-Tl1a (Trittame loki (Brush-footed trapdoor spider)).